An 881-amino-acid chain; its full sequence is Protein translocase subunit SecA (881 aa).

ATP is bound by residues Gln-83, 101–105 (GEGKT), and Asp-492.

Belongs to the SecA family.

It is found in the plastid. Its subcellular location is the chloroplast stroma. It localises to the chloroplast thylakoid membrane. It carries out the reaction ATP + H2O + cellular proteinSide 1 = ADP + phosphate + cellular proteinSide 2.. In terms of biological role, has a central role in coupling the hydrolysis of ATP to the transfer of proteins across the thylakoid membrane. In Emiliania huxleyi (Coccolithophore), this protein is Protein translocase subunit SecA.